The sequence spans 136 residues: TBK1 inhibitor DP96R (136 aa).

A disordered region spans residues 66–86 (NNALEKPAGANNIPEKSAGRM).

Belongs to the asfivirus DP96R family.

In terms of biological role, inhibits cGAS-STING-mediated type I IFN expression and NF-kB activation by inhibiting TBK1 and IKBKB/IKKB. Inhibits host TBK1 phosphorylation. In Ornithodoros (relapsing fever ticks), this protein is TBK1 inhibitor DP96R.